The primary structure comprises 241 residues: Sugar fermentation stimulation protein homolog (241 aa).

It belongs to the SfsA family.

The sequence is that of Sugar fermentation stimulation protein homolog from Nostoc punctiforme (strain ATCC 29133 / PCC 73102).